The primary structure comprises 236 residues: MELRSALQSVCRTTAAAASASARSSLAGRHAFSTSARFQLQPPPNPYVSGKSRIETLRAALSNRKPAAGAAAGGSPGATSASSALPPRPPTANDSPWSIVDAINKDSNSSTSSSSSSSSSGGALYSSSKPSPMQTWNETDFETRHMAPQQELNIRLRPSTGRTFYVSGHQDFAGALKLLHRTVAANKVKKDVRLQRFHERPALKRKRNLRERWRARFKEGFKAAVNRTFELKNQGW.

The interval 65 to 136 (KPAAGAAAGG…SSKPSPMQTW (72 aa)) is disordered. The span at 107-131 (SNSSTSSSSSSSSSGGALYSSSKPS) shows a compositional bias: low complexity.

This sequence belongs to the bacterial ribosomal protein bS21 family. Component of the mitochondrial small ribosomal subunit (mt-SSU). Mature N.crassa 74S mitochondrial ribosomes consist of a small (37S) and a large (54S) subunit. The 37S small subunit contains a 16S ribosomal RNA (16S mt-rRNA) and 32 different proteins. The 54S large subunit contains a 23S rRNA (23S mt-rRNA) and 42 different proteins.

The protein resides in the mitochondrion. Component of the mitochondrial ribosome (mitoribosome), a dedicated translation machinery responsible for the synthesis of mitochondrial genome-encoded proteins, including at least some of the essential transmembrane subunits of the mitochondrial respiratory chain. The mitoribosomes are attached to the mitochondrial inner membrane and translation products are cotranslationally integrated into the membrane. This is Small ribosomal subunit protein bS21m (mrp21) from Neurospora crassa (strain ATCC 24698 / 74-OR23-1A / CBS 708.71 / DSM 1257 / FGSC 987).